The chain runs to 315 residues: Acetyl-coenzyme A carboxylase carboxyl transferase subunit alpha (315 aa).

Residues 39 to 293 (RLQDKSSTLT…RADLIEQLDM (255 aa)) form the CoA carboxyltransferase C-terminal domain.

This sequence belongs to the AccA family. As to quaternary structure, acetyl-CoA carboxylase is a heterohexamer composed of biotin carboxyl carrier protein (AccB), biotin carboxylase (AccC) and two subunits each of ACCase subunit alpha (AccA) and ACCase subunit beta (AccD).

The protein resides in the cytoplasm. The enzyme catalyses N(6)-carboxybiotinyl-L-lysyl-[protein] + acetyl-CoA = N(6)-biotinyl-L-lysyl-[protein] + malonyl-CoA. The protein operates within lipid metabolism; malonyl-CoA biosynthesis; malonyl-CoA from acetyl-CoA: step 1/1. Its function is as follows. Component of the acetyl coenzyme A carboxylase (ACC) complex. First, biotin carboxylase catalyzes the carboxylation of biotin on its carrier protein (BCCP) and then the CO(2) group is transferred by the carboxyltransferase to acetyl-CoA to form malonyl-CoA. The protein is Acetyl-coenzyme A carboxylase carboxyl transferase subunit alpha of Pseudomonas entomophila (strain L48).